A 783-amino-acid chain; its full sequence is MSETPNTNEQNNPNNQQDGTGQNPMPPMPTGKPQMPERPERHNQADGAPKRPGDDDRKSERPTWLSEFSDKEEDFASRLNTRPPQRASIITIIIIFLVAFFIGSQMMNMVHGEETDDLTTSEFVQAVEQGRVENVVYNAGEYTVTGKYYPAATAGSTIAESYNSAIESVDVKLGTILEPSNPSSVGIETTSLEEKTLGTERNYTATYVGQDSLMELLSAHPEVEYQVTLPSNVTEILISVLPMLLFAGLLIYFFSQMSKANNSQMSFGKAKAKKTTEERPDVRFSDVAGEDEAVEELQEIKDFLVNPGKYQKLGAKIPRGCLLVGPPGTGKTLLARAVAGEANVPFFSISGSEFVEMFVGVGASRVRNLFEQAKEAAPSIIFIDEIDAVGRQRGTGLGGGHDEREQTLNQLLVEMDGFEKNDAVVLIAATNRVDVLDPALLRPGRFDRQIVVDGPDVKGRVKILEVHAKNKPIGEDVDLERIAKLTSGMTGADLMNLMNEAALLTARRNKDKIGMDEVNESMERLMAGPERKTRVLNEKTRRTIAYHESGHALVGHMLENADPVHKITIVPRGMALGYTMSIPDEDKFLVSRSAMLDELAVFMGGRVAEEIFCGDITTGASNDLERATKTARKMVVSYGMSEALGQQTFGQPNHEVFLGRDYGNTQDYSPETAQRIDEEVARLMKEAHDTAYEILSARQEQMHTMAKVLLERETVDGEECQALLNNTWDEFLAKKQAEAAAKAADQAEQPQVEAEPVAQVATPAAPVAPAVPEAPQPPAAPQQ.

Residues 1-16 show a composition bias toward low complexity; sequence MSETPNTNEQNNPNNQ. Residues 1 to 79 form a disordered region; it reads MSETPNTNEQ…DKEEDFASRL (79 aa). Residues 1 to 86 are Cytoplasmic-facing; the sequence is MSETPNTNEQ…SRLNTRPPQR (86 aa). A compositionally biased stretch (basic and acidic residues) spans 35-61; it reads MPERPERHNQADGAPKRPGDDDRKSER. Residues 87-107 traverse the membrane as a helical segment; sequence ASIITIIIIFLVAFFIGSQMM. The Extracellular segment spans residues 108-233; it reads NMVHGEETDD…EYQVTLPSNV (126 aa). Residues 234–254 form a helical membrane-spanning segment; it reads TEILISVLPMLLFAGLLIYFF. At 255–783 the chain is on the cytoplasmic side; the sequence is SQMSKANNSQ…APQPPAAPQQ (529 aa). 325–332 lines the ATP pocket; it reads GPPGTGKT. Zn(2+) is bound at residue His-547. Residue Glu-548 is part of the active site. Zn(2+)-binding residues include His-551 and Asp-623. The segment covering 738 to 771 has biased composition (low complexity); the sequence is EAAAKAADQAEQPQVEAEPVAQVATPAAPVAPAV. Residues 738 to 783 form a disordered region; sequence EAAAKAADQAEQPQVEAEPVAQVATPAAPVAPAVPEAPQPPAAPQQ. The segment covering 772–783 has biased composition (pro residues); that stretch reads PEAPQPPAAPQQ.

This sequence in the central section; belongs to the AAA ATPase family. In the C-terminal section; belongs to the peptidase M41 family. Homohexamer. It depends on Zn(2+) as a cofactor.

It is found in the cell membrane. Functionally, acts as a processive, ATP-dependent zinc metallopeptidase for both cytoplasmic and membrane proteins. Plays a role in the quality control of integral membrane proteins. The polypeptide is ATP-dependent zinc metalloprotease FtsH (Slackia heliotrinireducens (strain ATCC 29202 / DSM 20476 / NCTC 11029 / RHS 1) (Peptococcus heliotrinreducens)).